Reading from the N-terminus, the 1277-residue chain is Protein FAM83H (1277 aa).

The span at 1 to 12 shows a compositional bias: polar residues; the sequence is MARRSQSSSQGE. Disordered stretches follow at residues 1–20, 67–98, 717–756, 772–805, 971–1018, 1070–1130, 1158–1225, and 1247–1266; these read MARRSQSSSQGENPLDPNYL, SLQRPPESGQENPYPDSVYGSQEDADGSSGTY, FGSTGDLSVEKAKENPPAEKEKEEGLLSRHDSFRTRTNPL, SKLEQHTSTAESVQEMQKEQSTSELVSENETGRT, EQTS…NSAF, KAEE…SRLS, QKNR…RDIL, and KKDEQPSHADDNDDKKAGKI. Residues 724–750 are compositionally biased toward basic and acidic residues; sequence SVEKAKENPPAEKEKEEGLLSRHDSFR. Polar residues-rich tracts occupy residues 777–805, 971–982, 993–1015, and 1112–1130; these read HTSTAESVQEMQKEQSTSELVSENETGRT, EQTSSTIQTIGN, SGPTITEVTEATQSSENLPTRPN, and KSLSVSPPKTSSISQSRLS. Over residues 1204–1215 the composition is skewed to low complexity; that stretch reads SFLSRSRFSRPS. The segment covering 1247 to 1263 has biased composition (basic and acidic residues); the sequence is KKDEQPSHADDNDDKKA.

This sequence belongs to the FAM83 family.

It localises to the cytoplasm. It is found in the cytoskeleton. In terms of biological role, may play a role in keratin cytoskeleton disassembly. The chain is Protein FAM83H from Xenopus tropicalis (Western clawed frog).